The primary structure comprises 290 residues: Agmatinase (290 aa).

6 residues coordinate Mn(2+): histidine 112, aspartate 135, histidine 137, aspartate 139, aspartate 216, and aspartate 218.

This sequence belongs to the arginase family. Agmatinase subfamily. It depends on Mn(2+) as a cofactor.

It carries out the reaction agmatine + H2O = urea + putrescine. It participates in amine and polyamine biosynthesis; putrescine biosynthesis via agmatine pathway; putrescine from agmatine: step 1/1. Functionally, catalyzes the formation of putrescine from agmatine. This chain is Agmatinase (speB), found in Bacillus cereus (strain ATCC 14579 / DSM 31 / CCUG 7414 / JCM 2152 / NBRC 15305 / NCIMB 9373 / NCTC 2599 / NRRL B-3711).